The sequence spans 273 residues: Putative pyruvate, phosphate dikinase regulatory protein (273 aa).

Residue 153–160 (GISRTSKT) coordinates ADP.

This sequence belongs to the pyruvate, phosphate/water dikinase regulatory protein family. PDRP subfamily.

The catalysed reaction is N(tele)-phospho-L-histidyl/L-threonyl-[pyruvate, phosphate dikinase] + ADP = N(tele)-phospho-L-histidyl/O-phospho-L-threonyl-[pyruvate, phosphate dikinase] + AMP + H(+). It catalyses the reaction N(tele)-phospho-L-histidyl/O-phospho-L-threonyl-[pyruvate, phosphate dikinase] + phosphate + H(+) = N(tele)-phospho-L-histidyl/L-threonyl-[pyruvate, phosphate dikinase] + diphosphate. Bifunctional serine/threonine kinase and phosphorylase involved in the regulation of the pyruvate, phosphate dikinase (PPDK) by catalyzing its phosphorylation/dephosphorylation. The sequence is that of Putative pyruvate, phosphate dikinase regulatory protein from Rhizobium etli (strain CIAT 652).